The sequence spans 901 residues: MLIPSKLSRPVRLDHTVVRERLLAKLSGANNFRLALITSPAGYGKTTLISQWASGKSDLGWYSLDEGDNQTERFASYLIAAIQQATNGHCVTSEIMVQKRQYASLSSLFAQLFIELAEWHRPLYLVIDDYHLITNPVIHESMRFFLRHQPENLTLVVLSRNLPQLGIANLRVRDQLLEVGSQQLSFNHQEAKQFFDCRLSSPIEAAESSRLCDDVAGWATALQLIALSARQNNSPTHQSARRLSGINASHLSDYLVDEVLDSVDPATRQFLLKSSLLRSMNDALIVRVTGEDNGQMRLEEIERQGLFLQRMDDSGEWFSFHPLFGSFLRQRCQWELATELPEVHRSAAESWMAQGFPSEAIHHALAAGDANMLRDILLNHAWGLFNHSELTLLEESLRALPWESLLENPRLVLLQAWLMQSQHRYSEVNMLLARAEQEMKGEMDPTLHGEFNALRAQVAINDGDPEEAERLAMIALDELPLANFYSRIVATSVHGEVLHCKGDLSRSLALMQQTEQMARRHDIWHYALWSMIQQSEILFAQGFLQAAWETQEKAFQLIHDQHLEQLPMHEFLLRIRAQLLWAWSRLDEAESSARHGVEVLSAFQPQQQLQCLALLVQCSLARGDLDNARNHLNRLENLLGNGQYHSDWVSNADKVRVIYWQMIGDKKSAANWLRQTPKPEFANNHFLQSQWRNIARVQILLGDFDPAEIVLEELNENARSLRLMSDLNRNLLLLNQLYWQAGRKNDAQRVLLEALQLANRTGFISHFVIEGEVMAQQLRQLIQLNTLPELDQHRAQRILREINQHHRHKFAHFDENFVERLLTHPEVPELIRTSPLTQREWQVLGLIYSGYSNEQIAGELAVAATTIKTHIRNLYQKLGVAHRQDAVQHAQQLLKMMGYGV.

39-46 (SPAGYGKT) provides a ligand contact to ATP. Residues 829 to 894 (ELIRTSPLTQ…DAVQHAQQLL (66 aa)) form the HTH luxR-type domain. A DNA-binding region (H-T-H motif) is located at residues 853–872 (NEQIAGELAVAATTIKTHIR).

The protein belongs to the MalT family. As to quaternary structure, monomer in solution. Oligomerizes to an active state in the presence of the positive effectors ATP and maltotriose.

Activated by ATP and maltotriose, which are both required for DNA binding. Its function is as follows. Positively regulates the transcription of the maltose regulon whose gene products are responsible for uptake and catabolism of malto-oligosaccharides. Specifically binds to the promoter region of its target genes, recognizing a short DNA motif called the MalT box. This Enterobacter sp. (strain 638) protein is HTH-type transcriptional regulator MalT.